We begin with the raw amino-acid sequence, 66 residues long: Large ribosomal subunit protein uL29 (66 aa).

It belongs to the universal ribosomal protein uL29 family.

The chain is Large ribosomal subunit protein uL29 from Bacillus anthracis (strain CDC 684 / NRRL 3495).